The sequence spans 213 residues: ATP phosphoribosyltransferase (213 aa).

This sequence belongs to the ATP phosphoribosyltransferase family. Short subfamily. In terms of assembly, heteromultimer composed of HisG and HisZ subunits.

It is found in the cytoplasm. The enzyme catalyses 1-(5-phospho-beta-D-ribosyl)-ATP + diphosphate = 5-phospho-alpha-D-ribose 1-diphosphate + ATP. It participates in amino-acid biosynthesis; L-histidine biosynthesis; L-histidine from 5-phospho-alpha-D-ribose 1-diphosphate: step 1/9. In terms of biological role, catalyzes the condensation of ATP and 5-phosphoribose 1-diphosphate to form N'-(5'-phosphoribosyl)-ATP (PR-ATP). Has a crucial role in the pathway because the rate of histidine biosynthesis seems to be controlled primarily by regulation of HisG enzymatic activity. This chain is ATP phosphoribosyltransferase, found in Listeria monocytogenes serotype 4a (strain HCC23).